The chain runs to 165 residues: Ribosome maturation factor RimM (165 aa).

A PRC barrel domain is found at 90-161 (EDEYFIVDLV…LITIRPSGEW (72 aa)).

It belongs to the RimM family. Binds ribosomal protein uS19.

It localises to the cytoplasm. In terms of biological role, an accessory protein needed during the final step in the assembly of 30S ribosomal subunit, possibly for assembly of the head region. Essential for efficient processing of 16S rRNA. May be needed both before and after RbfA during the maturation of 16S rRNA. It has affinity for free ribosomal 30S subunits but not for 70S ribosomes. This chain is Ribosome maturation factor RimM, found in Clostridium perfringens (strain SM101 / Type A).